The following is a 425-amino-acid chain: Monoacylglycerol lipase ABHD2 (425 aa).

The Cytoplasmic portion of the chain corresponds to 1 to 9; the sequence is MNAMMETSE. Residues 10–30 traverse the membrane as a helical; Signal-anchor for type II membrane protein segment; sequence LPAVFDGVKLAAVAAVLYVIV. At 31–425 the chain is on the extracellular side; the sequence is RCLNLKSPTA…DTELVEADLE (395 aa). In terms of domain architecture, AB hydrolase-1 spans 128–382; sequence MVICPGIANH…HGGHLGFFEG (255 aa). N136 carries an N-linked (GlcNAc...) asparagine glycan. The Nucleophile role is filled by S207. Active-site charge relay system residues include D345 and H376. N410 is a glycosylation site (N-linked (GlcNAc...) asparagine).

The protein belongs to the AB hydrolase superfamily. AB hydrolase 4 family.

The protein localises to the cell membrane. It carries out the reaction Hydrolyzes glycerol monoesters of long-chain fatty acids.. The catalysed reaction is an acetyl ester + H2O = an aliphatic alcohol + acetate + H(+). It catalyses the reaction a triacylglycerol + H2O = a diacylglycerol + a fatty acid + H(+). The enzyme catalyses 2-(5Z,8Z,11Z,14Z-eicosatetraenoyl)-glycerol + H2O = glycerol + (5Z,8Z,11Z,14Z)-eicosatetraenoate + H(+). It carries out the reaction a butanoate ester + H2O = an aliphatic alcohol + butanoate + H(+). The catalysed reaction is hexadecanoate ester + H2O = an aliphatic alcohol + hexadecanoate + H(+). Acylglycerol lipase activity is activated upon binding to progesterone. Progesterone-dependent acylglycerol lipase that catalyzes hydrolysis of endocannabinoid arachidonoylglycerol (AG) from cell membrane. Acts as a progesterone receptor: progesterone-binding activates the acylglycerol lipase activity, mediating degradation of 1-arachidonoylglycerol (1AG) and 2-arachidonoylglycerol (2AG) to glycerol and arachidonic acid (AA). Also displays an ester hydrolase activity against acetyl ester, butanoate ester and hexadecanoate ester. Plays a key role in sperm capacitation in response to progesterone by mediating degradation of 2AG, an inhibitor of the sperm calcium channel CatSper, leading to calcium influx via CatSper and sperm activation. May also play a role in smooth muscle cells migration. This chain is Monoacylglycerol lipase ABHD2 (ABHD2), found in Bos taurus (Bovine).